The following is a 238-amino-acid chain: MAQVSMRDMLNAGVHYGHQTRYWNPKMKPFIFGARNGVHVINLEKTLPLFNEALAELTRISSNNGKILFVGTKRAASEAVKAAAVDCQQFYVNHRWLGGMLTNWKTVRQSIKRLKDLETQTQDGTFDKITKKEALMRTRELETLELSLGGIKDMAGLPDAIFVIGADHEHIAIKEANNLGIPVFAIVDTNSTPDGVNYIIPGNDDATRAIQLYLDAAAAAVKEGRGSNVEAELEATAE.

This sequence belongs to the universal ribosomal protein uS2 family.

The sequence is that of Small ribosomal subunit protein uS2 from Actinobacillus pleuropneumoniae serotype 5b (strain L20).